Reading from the N-terminus, the 90-residue chain is Large ribosomal subunit protein bL27 (90 aa).

Residues 1-21 (MASKKAGGSTRNGRDSEAKRL) are disordered.

It belongs to the bacterial ribosomal protein bL27 family.

This is Large ribosomal subunit protein bL27 from Neisseria meningitidis serogroup C (strain 053442).